The chain runs to 398 residues: 2-amino-3-ketobutyrate coenzyme A ligase (398 aa).

111–112 (CF) lines the pyridoxal 5'-phosphate pocket. Position 136 (His136) interacts with substrate. Pyridoxal 5'-phosphate contacts are provided by residues Ser185, 210 to 213 (DDSH), 241 to 244 (TLGK), and 274 to 275 (SN). At Lys244 the chain carries N6-(pyridoxal phosphate)lysine. Arg368 is a substrate binding site.

The protein belongs to the class-II pyridoxal-phosphate-dependent aminotransferase family. As to quaternary structure, homodimer. Requires pyridoxal 5'-phosphate as cofactor.

The enzyme catalyses glycine + acetyl-CoA = (2S)-2-amino-3-oxobutanoate + CoA. The protein operates within amino-acid degradation; L-threonine degradation via oxydo-reductase pathway; glycine from L-threonine: step 2/2. Catalyzes the cleavage of 2-amino-3-ketobutyrate to glycine and acetyl-CoA. The protein is 2-amino-3-ketobutyrate coenzyme A ligase of Escherichia coli (strain K12).